The following is a 226-amino-acid chain: UPF0758 protein SUB0843 (226 aa).

The region spanning Gln103 to Ile225 is the MPN domain. The Zn(2+) site is built by His174, His176, and Asp187. The short motif at His174–Asp187 is the JAMM motif element.

This sequence belongs to the UPF0758 family.

The polypeptide is UPF0758 protein SUB0843 (Streptococcus uberis (strain ATCC BAA-854 / 0140J)).